The sequence spans 236 residues: Sensory rhodopsin II (236 aa).

Helical transmembrane passes span 4–24, 38–58, 73–93, 101–121, 122–142, 167–187, and 196–216; these read ITTWFTLGLLGELLGTAVLAY, LLLIAIPGIAIVAYALMALGF, YVDWLLTTPLNVWFLALLAGA, LVVLQALTIVFGFAGAVTPSP, VSYALFAVGGALFGGVIYLLY, FVVVLWLVYPVVWLLGAAGVG, and LVVVYLDVVTKVGFGVIALLA. K206 carries the post-translational modification N6-(retinylidene)lysine.

This sequence belongs to the archaeal/bacterial/fungal opsin family. The covalent binding of retinal to the apoprotein, bacterioopsin, generates bacteriorhodopsin.

The protein localises to the membrane. Its function is as follows. Mediates the photorepellent response. This Haloarcula marismortui (strain ATCC 43049 / DSM 3752 / JCM 8966 / VKM B-1809) (Halobacterium marismortui) protein is Sensory rhodopsin II (sop2).